A 338-amino-acid chain; its full sequence is D-erythrose-4-phosphate dehydrogenase (338 aa).

Position 12–13 (12–13 (RI)) interacts with NAD(+). Substrate is bound by residues 154–156 (SCT), Arg200, 213–214 (TK), and Arg236. Cys155 serves as the catalytic Nucleophile. NAD(+) is bound at residue Asn318.

This sequence belongs to the glyceraldehyde-3-phosphate dehydrogenase family. Epd subfamily. In terms of assembly, homotetramer.

It is found in the cytoplasm. It carries out the reaction D-erythrose 4-phosphate + NAD(+) + H2O = 4-phospho-D-erythronate + NADH + 2 H(+). The protein operates within cofactor biosynthesis; pyridoxine 5'-phosphate biosynthesis; pyridoxine 5'-phosphate from D-erythrose 4-phosphate: step 1/5. Functionally, catalyzes the NAD-dependent conversion of D-erythrose 4-phosphate to 4-phosphoerythronate. This is D-erythrose-4-phosphate dehydrogenase from Pectobacterium atrosepticum (strain SCRI 1043 / ATCC BAA-672) (Erwinia carotovora subsp. atroseptica).